An 89-amino-acid chain; its full sequence is Small ribosomal subunit protein uS15 (89 aa).

The interval 1–22 (MALEKEEKSQIINNYQLHETDT) is disordered. Residues 10–22 (QIINNYQLHETDT) are compositionally biased toward polar residues.

Belongs to the universal ribosomal protein uS15 family. In terms of assembly, part of the 30S ribosomal subunit. Forms a bridge to the 50S subunit in the 70S ribosome, contacting the 23S rRNA.

In terms of biological role, one of the primary rRNA binding proteins, it binds directly to 16S rRNA where it helps nucleate assembly of the platform of the 30S subunit by binding and bridging several RNA helices of the 16S rRNA. Functionally, forms an intersubunit bridge (bridge B4) with the 23S rRNA of the 50S subunit in the ribosome. The protein is Small ribosomal subunit protein uS15 of Chloroflexus aggregans (strain MD-66 / DSM 9485).